Reading from the N-terminus, the 875-residue chain is Probable serine/threonine-protein kinase samkC (875 aa).

Residues 1-12 (METTTITSILDD) show a composition bias toward polar residues. A disordered region spans residues 1–47 (METTTITSILDDNNNNNNNNNNNNNNNNNNNNNNNNNNNNNNNNNYN). Low complexity predominate over residues 13–45 (NNNNNNNNNNNNNNNNNNNNNNNNNNNNNNNNN). In terms of domain architecture, SAM spans 51-116 (WDNEMVCKWL…SEFDDLKNIF (66 aa)). Positions 135–162 (DNNNLNNLNNNNNNNNNNNNNNNNNNNN) form a coiled coil. Positions 136–168 (NNNLNNLNNNNNNNNNNNNNNNNNNNNNNNNNN) are enriched in low complexity. Residues 136–170 (NNNLNNLNNNNNNNNNNNNNNNNNNNNNNNNNNKT) form a disordered region. The region spanning 181–452 (YVFIKQMKGS…SKQLLNFSWF (272 aa)) is the Protein kinase domain. ATP is bound by residues 187–195 (MKGSVNCSL) and K210. The active-site Proton acceptor is D301. Disordered regions lie at residues 331-362 (NNND…NDTN) and 461-718 (SEPQ…NNNN). Over residues 474–554 (PQTSQSKPKP…KPKPSSSLSS (81 aa)) the composition is skewed to low complexity. Over residues 555-564 (EPPPLEPQPK) the composition is skewed to pro residues. 3 stretches are compositionally biased toward low complexity: residues 565-581 (PQTS…LSSS), 589-611 (QPTQ…SQPT), and 617-653 (QPKS…QQQK). The stretch at 626–655 (QSKQQQQQQQQQQQQQQQQQQQQQQQQKSK) forms a coiled coil. Residues 654–663 (SKPEQSKSKP) show a composition bias toward basic and acidic residues. A compositionally biased stretch (low complexity) spans 664-718 (EQSQSKPQPGQPLQSPSKPQPIPSTTKTTTTTTTTTTPNNNNNNNNNNNNNNNNN). Residues 842 to 862 (TLILYTFYYFLSNTLIYQIIL) traverse the membrane as a helical segment.

It belongs to the protein kinase superfamily. Ser/Thr protein kinase family.

It localises to the membrane. The enzyme catalyses L-seryl-[protein] + ATP = O-phospho-L-seryl-[protein] + ADP + H(+). The catalysed reaction is L-threonyl-[protein] + ATP = O-phospho-L-threonyl-[protein] + ADP + H(+). In Dictyostelium discoideum (Social amoeba), this protein is Probable serine/threonine-protein kinase samkC (samkC).